Here is a 524-residue protein sequence, read N- to C-terminus: Lycopene epsilon cyclase, chloroplastic (524 aa).

A chloroplast-targeting transit peptide spans 1-45 (MECVGARNFAAMAVSTFPSWSCRRKFPVVKRYSYRNIRFGLCSVR). Residue 111 to 139 (LVVIGCGPAGLALAAESAKLGLKVGLIGP) participates in NAD(+) binding. 2 helical membrane-spanning segments follow: residues 441 to 461 (FFLF…RSFF) and 475 to 495 (FLGS…MFVI).

Belongs to the lycopene cyclase family.

The protein resides in the plastid. It is found in the chloroplast membrane. The catalysed reaction is a carotenoid psi-end group = a carotenoid epsilon-end group. The protein operates within carotenoid biosynthesis; alpha-zeacarotene biosynthesis. Its pathway is carotenoid biosynthesis; delta-carotene biosynthesis. In terms of biological role, involved in carotenoid biosynthesis. Catalyzes the single epsilon-cyclization reaction which converts lycopene to delta-carotene and neurosporene to alpha-zeacarotene. Required for lutein biosynthesis. This is Lycopene epsilon cyclase, chloroplastic from Arabidopsis thaliana (Mouse-ear cress).